Consider the following 697-residue polypeptide: Elongation factor G (697 aa).

In terms of domain architecture, tr-type G spans 8 to 283 (EHIRNIGICA…AVVDFLPSPT (276 aa)). Residues 17 to 24 (AHIDAGKT), 81 to 85 (DTPGH), and 135 to 138 (NKMD) each bind GTP.

This sequence belongs to the TRAFAC class translation factor GTPase superfamily. Classic translation factor GTPase family. EF-G/EF-2 subfamily.

The protein localises to the cytoplasm. Catalyzes the GTP-dependent ribosomal translocation step during translation elongation. During this step, the ribosome changes from the pre-translocational (PRE) to the post-translocational (POST) state as the newly formed A-site-bound peptidyl-tRNA and P-site-bound deacylated tRNA move to the P and E sites, respectively. Catalyzes the coordinated movement of the two tRNA molecules, the mRNA and conformational changes in the ribosome. This Rickettsia massiliae (strain Mtu5) protein is Elongation factor G.